The following is a 575-amino-acid chain: Golgi-associated kinase 1A (575 aa).

A signal peptide spans 1-29; that stretch reads MASWLRRKLRGKRRPVIAFCLLMILSAMA. The propeptide at 30 to 119 is removed in mature form; sequence VTRFPPQRPS…GDLRHPGRVR (90 aa). The tract at residues 53–58 is O-glycosylated at one site; it reads TGAPAT. Over residues 143 to 153 the composition is skewed to basic and acidic residues; the sequence is VGDPGTKDLGH. Residues 143 to 162 are disordered; it reads VGDPGTKDLGHPQHGSPIQE. Positions 437-575 are cleaved as a propeptide — removed in mature form; sequence RYCCGFEPEP…NLTLFRDEDP (139 aa). Asparagine 566 carries an N-linked (GlcNAc...) asparagine glycan.

This sequence belongs to the GASK family. O-glycosylated with core 1 or possibly core 8 glycans. Post-translationally, proteolytically cleaved. Cleaved at Arg-120 and Arg-437 leading to a processed mature product of 35 kDa. The cleavage takes place in the Golgi apparatus. Expressed in skin, lung and colon (at protein level).

It localises to the secreted. The protein resides in the endoplasmic reticulum. It is found in the golgi apparatus. The protein localises to the membrane. Its subcellular location is the caveola. This Homo sapiens (Human) protein is Golgi-associated kinase 1A.